The primary structure comprises 422 residues: L-cysteine:1D-myo-inositol 2-amino-2-deoxy-alpha-D-glucopyranoside ligase (422 aa).

Positions 1 to 34 (MKSWSTPAPPTVPSRPDRLRLHDTATGRTRHPGN) are disordered. The span at 15-25 (RPDRLRLHDTA) shows a compositional bias: basic and acidic residues. Cysteine 44 is a Zn(2+) binding site. L-cysteinyl-5'-AMP contacts are provided by residues 44–47 (CGIT), threonine 59, and 82–84 (NVT). The short motif at 46–56 (ITPYDATHLGH) is the 'HIGH' region element. The 'ERGGDP' region motif lies at 196 to 201 (ERGGDP). Tryptophan 237 lines the L-cysteinyl-5'-AMP pocket. Cysteine 241 serves as a coordination point for Zn(2+). Residue 259 to 261 (GSD) coordinates L-cysteinyl-5'-AMP. Residue histidine 266 participates in Zn(2+) binding. Residue valine 292 participates in L-cysteinyl-5'-AMP binding. Residues 298 to 302 (KMSKS) carry the 'KMSKS' region motif.

The protein belongs to the class-I aminoacyl-tRNA synthetase family. MshC subfamily. In terms of assembly, monomer. Zn(2+) serves as cofactor.

It catalyses the reaction 1D-myo-inositol 2-amino-2-deoxy-alpha-D-glucopyranoside + L-cysteine + ATP = 1D-myo-inositol 2-(L-cysteinylamino)-2-deoxy-alpha-D-glucopyranoside + AMP + diphosphate + H(+). In terms of biological role, catalyzes the ATP-dependent condensation of GlcN-Ins and L-cysteine to form L-Cys-GlcN-Ins. The chain is L-cysteine:1D-myo-inositol 2-amino-2-deoxy-alpha-D-glucopyranoside ligase from Micrococcus luteus (strain ATCC 4698 / DSM 20030 / JCM 1464 / CCM 169 / CCUG 5858 / IAM 1056 / NBRC 3333 / NCIMB 9278 / NCTC 2665 / VKM Ac-2230) (Micrococcus lysodeikticus).